The sequence spans 226 residues: Cytidylate kinase (226 aa).

14–22 (GPAGAGKST) is an ATP binding site.

Belongs to the cytidylate kinase family. Type 1 subfamily.

The protein resides in the cytoplasm. It catalyses the reaction CMP + ATP = CDP + ADP. The catalysed reaction is dCMP + ATP = dCDP + ADP. This is Cytidylate kinase from Symbiobacterium thermophilum (strain DSM 24528 / JCM 14929 / IAM 14863 / T).